The following is a 531-amino-acid chain: Putative lipase ATG15 (531 aa).

Residues 1–11 (MKPGIKISKRY) are Cytoplasmic-facing. The chain crosses the membrane as a helical; Signal-anchor for type II membrane protein span at residues 12 to 31 (SARNASVITVLLLLIYLIYI). Residues 32-531 (NKETIQTKYQ…WIGICTEYGI (500 aa)) are Lumenal-facing. N-linked (GlcNAc...) asparagine glycans are attached at residues Asn178 and Asn207. Ser340 acts as the Charge relay system in catalysis. Residues 482-513 (VPKKHKSSSSTASSTSAETSTLTVGPSPPEKT) are disordered. Residues 489-502 (SSSTASSTSAETST) are compositionally biased toward low complexity.

This sequence belongs to the AB hydrolase superfamily. Lipase family. In terms of assembly, binds to both phosphatidylinositol (PI) and phosphatidylinositol 3,5-bisphosphate (PIP2).

The protein resides in the endosome. The protein localises to the multivesicular body membrane. It localises to the prevacuolar compartment membrane. It catalyses the reaction a triacylglycerol + H2O = a diacylglycerol + a fatty acid + H(+). Lipase which is essential for lysis of subvacuolar cytoplasm to vacuole targeted bodies and intravacuolar autophagic bodies. Involved in the lysis of intravacuolar multivesicular body (MVB) vesicles. The intravacuolar membrane disintegration by ATG15 is critical to life span extension. The protein is Putative lipase ATG15 (ATG15) of Kluyveromyces lactis (strain ATCC 8585 / CBS 2359 / DSM 70799 / NBRC 1267 / NRRL Y-1140 / WM37) (Yeast).